The following is a 289-amino-acid chain: Kinetochore-associated protein MTW1 (289 aa).

Residues 105–147 adopt a coiled-coil conformation; it reads RLENQKDLVIVDENELKKSEEKLREKVNDVELAFKKNEMLLKR.

Belongs to the mis12 family. Component of the MIND kinetochore complex, which is composed of at least MTW1, NNF1, NSL1 and DSN1.

Its subcellular location is the chromosome. The protein resides in the centromere. The protein localises to the kinetochore. It localises to the cytoplasm. It is found in the cytoskeleton. Its subcellular location is the spindle pole. Functionally, acts as an essential component of the kinetochore MIND complex, which is required for the spindle checkpoint and kinetochore integrity. MIND plays a role in establishing a bipolar spindle-kinetochore interaction by joining kinetochore subunits contacting DNA to those contacting microtubules. This is Kinetochore-associated protein MTW1 (MTW1) from Saccharomyces cerevisiae (strain ATCC 204508 / S288c) (Baker's yeast).